Reading from the N-terminus, the 508-residue chain is O-acetyltransferase pigM (508 aa).

Residues 166 to 188 (TPAPDERGKISPSLEDAAGSPRT) form a disordered region.

Its pathway is secondary metabolite biosynthesis. In terms of biological role, O-acetyltransferase; part of the gene cluster that mediates the biosynthesis of azaphilone pigments (MonAzPs), a complex mixture of compounds with a common azaphilone skeleton very widely used as food colorants. PigM and pigO are involved in the elimination of the omega-1 alcohol with pigM acting as an O-acetyltransferase that synthesizes the O-11 acetyl intermediate whereas pigO eliminates acetic acid to yield an intermediate with a C10(11) double bond. The first step of the pathway is performed by the nrPKS pigA that forms the hexaketide precursor from successive condensations of five malonyl-CoA units, with a simple acetyl-CoA starter unit. The role of esterase pigG is not clear, but it may play at most a supplementary role in the formation of the benzaldehyde produced by the pigA nrPKS. This very reactive benzaldehyde is intercepted by the pigC ketoreductase that to provide the first stable enzyme-free MonAzPs intermediate, 6-(4-hydroxy-2-oxopentyl)-3-methyl-2,4-dioxocyclohexane carbaldehyde, also known as M7PKS-1. The FAD-dependent monooxygenase pigN hydroxylates M7PKS-1 at C-4, which triggers the formation of the pyran ring. PigJ, pigK and pigD are involved in the acetylation of the pyran ring. PigJ and pigK form the two subunits of a dedicated fungal FAS that produces the side chain fatty acyl moiety of MonAzPs and pigD transfers the fatty acyl chain to the C-4 alcohol. PigM and pigO are involved in the elimination of the omega-1 alcohol. PigM acts as an O-acetyltransferase that synthesizes the putative O-11 acetyl intermediate whereas pigO eliminates acetic acid to yield an intermediate with a C10(11) double bond. The dehydration of the C-11 alcohol followed by the reduction of the C6(7) double bond by the NAD(P)H-dependent oxidoreductase pigE increases the electrophilicity of the C-5 ketone of the resulting acyl benzopyran. This in turn sets up the C-5 ketone for an intramolecular Knoevenagel aldol condensation with the C-20 enol of the side chain. This condensation affords the characteristic linear tricyclic carbon skeletons of the yellow pigments that serve as the common precursors for the classical yellow pigments monascin and ankaflavin, orange pigments rubopunctatin and monascorubrin, and red pigments ribropunctamine and monascorubramine. The FAD-dependent oxidoreductase pigF is especially invoved in the biosynthesis of orange and red pigments via desaturation of C6(7). The polypeptide is O-acetyltransferase pigM (Monascus ruber (Mold)).